Here is a 774-residue protein sequence, read N- to C-terminus: Effector protein hopW1-1 (774 aa).

Disordered stretches follow at residues 1–33 (MSPA…QSPQ) and 301–340 (CQAG…VPGQ). Low complexity predominate over residues 9–23 (TPHSFPPSFTGTSSS). A compositionally biased stretch (polar residues) spans 24 to 33 (AENSHAQSPQ).

This sequence belongs to the HopW family. As to quaternary structure, interacts (via C-terminus) with Arabidopsis WIN1, WIN2 and WIN3.

The protein localises to the secreted. Its function is as follows. Induces hypersensitive response (HR). This Pseudomonas syringae pv. maculicola protein is Effector protein hopW1-1 (hopW1-1).